Consider the following 2197-residue polypeptide: MSNSTRDYPISAAFFCPQSRAPPAEYLHALYSFLSQNTLGKAFLRHIASLDEVWPIFSEARDDILRLPDARQNINVLVDWAKGGSSTPIAEARSGVIALPSVFIVQLGQYFRYLEANRLSHGDFIGQLKDIGGVHGYCGGAAAALSVACAADETQLIDHAAVLLRLFVGIGCCIEAVDDWTTTESTVIACRLKYEGQGDELCSRFPEPKSISITGNARTLSELFDYAVGLGLPTHKMEITGKAHNPENAELAKDFINLYRRTPALQLPPTFKLQATVRSNRTAEKLTNEGIIEDMITMIIASQCDWNTLLTRVAEDMKVSGRPFHKMVSFGMNDCVPVTPFNRQRLKTTKFEAHVLIEPLKPSRISAAQYPTFSDDAIAITGASLRLPGANNLDELWDLISKGTDCHREIPKDRFDPHNIYRTSQSGFSKAQKYFGNFLEDIKGFDRAYFSMGVREAANIDPQQRLLLELAVEALEASGYLANHVREAGDPVGCFVGASFIEYLENTGAHPPTAYTAPGTIRAFLCGRLSYYFGWTAPAEVIDTACSASMVAINRAVKSIQAGECEMALAGGVNLITGMNNYLDLAKAGFLSPTGQCKPFDQSGDGYCRSDGAGFVVLKKLSQALVNGDPIMGVIPSIETNQGGLSGSLTVPSSTALQALYKRVLSKSGLEPAQITYVEAHGTGTQAGDPIEVESVRAVLGDPTRAHSLSLGSVKGNIGHCETGAGVAGLLKVLAMIKHGGIPPLASHKALNPKIPALETHHMEIAKQLKPWDVPLRAAFVNSYGAAGSNAAVICVEPPPVVTDGSSLIGTEPQKVTLPVIVSGATRKSLVLNARALASYLSQDGSHLSIHDVAFTVNQRRKRNRFCAEVSGTDLPSLVQSLRAVDSPSFESPGKSKPVVLVFSGQNTNAVALDRTIYDTYPVFKAYIDACDSEIVKLGFPSIMEAIFQKEPISTAVALQGSIFAMQYACARSWIDAGLKPRAIIGHSFGELTALAVSGALSLADSLKLVTCRGHLIDTKWGEERGGMLVIHADVATVERFQSRFKAQHDGAELEIACYNSPTTTVVAGPVAYMDAAEQMLATDPDFQGLRKLRIVTSNAFHSSLSDPILADLDSMADTLTWNEPSIPLEACTSEGLASIKEWSASRHTRGSVYFTKAVERIEGRLGACIWVEAGLDSAIIAMARKASSKPDSQVFQSVSTKAGATSFIDGIVNNLWRQGVPLSHLNALSATVKPNPVWLPPYQFEREQHWTEHIDRATEASQASTTSDTIQSTPTQTVQSPPKLISRLASLQYQINTQCERFQKITEGHAVLYEPLCPASLYMECVVMALQELAGDLGSRTLDFENLDFHAGLGLQTDRRVLLDLEEARPHSWTFKVQSTKAGSSRSLLHCSGRVILTESSVPTTFQRLVDGPRSRLDQDKDAEKLMSSRAYGLFSNIMTYSEFLKPISSIILRENESLATIKLPPNQPGLHESTAWKRCDAVFLDGFISSSGLLLNSSSVVQSGHVLIAVGVERAILTAAFQASLASSWQAYATFTMVGETHALCDVFACTPDGEVVAMMTGVRFNKMEISKLAKSLSSVNASSPTGGRTQPPAAPKTQAQPMASRPSPTPLQVSFATAEPAAPEPVQQSTAALARNDIGPVLKSLISNYTGLIEEDVSEDSPLVDLGLDSLSSVEFASEIGTKFGVTLDADTVGDLTLHSLCQRLSGTSNVVSQKMSETPAAAPVKELIETVPSPIVTFSSPVSNSITSVLKSLLGSYTGLQEEDMPDDVPLIDLGLDSLSSVEFASELNDKMGADIDSAVVADMTLSALEQQLGASATPPSTTGSSTPGDISTAATTPYATGASTPDYLVHGNKPSISNGVVAAKDSYQVKTVEYKRVSGVPIHADIYVPLVQRVSPMPLALMIHGGGHMTLSRKAVRPTQAKYLLSHGFLPISIDYRLCPEVNLIDGPIADVRDAYVWACQNLGTHLAEHSISVDGGRVVVVGWSTGGHLAMSLGWSLEEAGVPPPKAVLSFYAPVDFESGELDNQKNPALPKPRMTLDQITKALPRTPVTQYGASSTDETNLGWLHPGDPRSELLLHVFHSDIGLPLILHGLPISGSGRPSPSLVASISPLARLRNGSYTIPTFIIHGTKDVIAPYAAAERFVKIMSEKGVKSGFLSLSGTGHVFDVTMKPDSKGWEDKVKPGLDFLIQNA.

The interval 14 to 253 is N-terminal acylcarrier protein transacylase domain (SAT); the sequence is FFCPQSRAPP…HNPENAELAK (240 aa). A Ketosynthase family 3 (KS3) domain is found at 375 to 797; that stretch reads DDAIAITGAS…GSNAAVICVE (423 aa). Catalysis depends on for beta-ketoacyl synthase activity residues C546, H681, and H720. The tract at residues 901–1198 is malonyl-CoA:ACP transacylase (MAT) domain; the sequence is LVFSGQNTNA…SKPDSQVFQS (298 aa). Residue S988 is the For acyl/malonyl transferase activity of the active site. The tract at residues 1258–1282 is disordered; the sequence is ATEASQASTTSDTIQSTPTQTVQSP. The segment covering 1260–1281 has biased composition (polar residues); it reads EASQASTTSDTIQSTPTQTVQS. The N-terminal hotdog fold stretch occupies residues 1276 to 1403; that stretch reads TQTVQSPPKL…GRVILTESSV (128 aa). Residues 1276-1576 form the PKS/mFAS DH domain; it reads TQTVQSPPKL…FNKMEISKLA (301 aa). Residues 1284–1575 form a product template (PT) domain region; that stretch reads KLISRLASLQ…RFNKMEISKL (292 aa). H1310 acts as the Proton acceptor; for dehydratase activity in catalysis. The segment at 1424–1576 is C-terminal hotdog fold; sequence AEKLMSSRAY…FNKMEISKLA (153 aa). D1487 (proton donor; for dehydratase activity) is an active-site residue. Polar residues predominate over residues 1581–1591; that stretch reads SVNASSPTGGR. The disordered stretch occupies residues 1581–1614; that stretch reads SVNASSPTGGRTQPPAAPKTQAQPMASRPSPTPL. Carrier domains follow at residues 1639 to 1719 and 1748 to 1824; these read NDIG…SQKM and NSIT…ATPP. S1673 and S1782 each carry O-(pantetheine 4'-phosphoryl)serine. A disordered region spans residues 1817–1841; it reads LGASATPPSTTGSSTPGDISTAATT. The span at 1818–1833 shows a compositional bias: low complexity; it reads GASATPPSTTGSSTPG. Residues 1870-2197 form a thioesterase (TE) domain region; it reads DSYQVKTVEY…PGLDFLIQNA (328 aa). Catalysis depends on for thioesterase activity residues S1990 and D2137.

Requires pantetheine 4'-phosphate as cofactor.

The enzyme catalyses 6 malonyl-CoA + 2 acetyl-CoA + 5 H(+) = o-orsellinate depside + 6 CO2 + 8 CoA + H2O. Its function is as follows. Non-reducing polyketide synthase; part of a gene cluster that mediates the biosynthesis of a yet unidentified natural product. The first step in the pathway is performed by Preu6 that condenses 2 acetyl-CoA starter units with 6 malonyl-CoA units to produce lecanoric acid (LA), also known as orsellinate depside, an intermediate that has significant antifungal activity against the plant pathogen Botryosphaeria berengeriana. The biosynthesis probably occurs via the formation of 2 orsellinate intermediates fused together by the C-terminal thioesterase (TE) domain that finally releases lecanoric acid. The chain is Non-reducing polyketide synthase Preu6 from Preussia isomera (Coprophilous fungus).